Here is a 463-residue protein sequence, read N- to C-terminus: Probable ECA polymerase (463 aa).

Transmembrane regions (helical) follow at residues 6-26 (FGGL…LTWM), 39-59 (FSLL…VLVF), 65-85 (VVPV…YAVY), 112-132 (ANLT…IFFL), 154-174 (GVAL…VYFL), 180-200 (AWLL…VIVG), 201-221 (GTRA…IVRG), 222-242 (WITL…MFWL), 340-360 (LVVM…GLVI), 377-397 (YKAA…IVLT), and 408-428 (VVFF…LYWL).

The protein belongs to the WzyE family. As to quaternary structure, probably part of a complex composed of WzxE, WzyE and WzzE.

It localises to the cell inner membrane. Its pathway is bacterial outer membrane biogenesis; enterobacterial common antigen biosynthesis. Probably involved in the polymerization of enterobacterial common antigen (ECA) trisaccharide repeat units. This Pectobacterium atrosepticum (strain SCRI 1043 / ATCC BAA-672) (Erwinia carotovora subsp. atroseptica) protein is Probable ECA polymerase.